We begin with the raw amino-acid sequence, 200 residues long: Recombination protein RecR (200 aa).

The C4-type zinc-finger motif lies at 58 to 75 (CPDCFCLKTSKTSSCDFC). Residues 82–177 (SFLCIVATPK…KISRLALGMP (96 aa)) enclose the Toprim domain.

The protein belongs to the RecR family.

May play a role in DNA repair. It seems to be involved in an RecBC-independent recombinational process of DNA repair. It may act with RecF and RecO. In Chlamydia muridarum (strain MoPn / Nigg), this protein is Recombination protein RecR.